The primary structure comprises 200 residues: Max dimerization protein 3 (200 aa).

Disordered stretches follow at residues 26–56 (EHGYASILPCDPATPGRRKRQRTNSNPDNVR) and 134–164 (LLPPNTERIRTDSLDSSTLSSERSDSDQEDL). The bHLH domain occupies 54–106 (NVRSVHNELEKHRRAQLRRCLEQLKQQVPLSMENSRHTTLSLLHRAKQHIKKL).

Efficient DNA binding requires dimerization with another bHLH protein. Binds DNA as a heterodimer with MAX.

The protein localises to the nucleus. Its function is as follows. Transcriptional repressor. Binds with MAX to form a sequence-specific DNA-binding protein complex which recognizes the core sequence 5'-CAC[GA]TG-3'. In Xenopus tropicalis (Western clawed frog), this protein is Max dimerization protein 3 (mxd3).